Here is a 169-residue protein sequence, read N- to C-terminus: Copper-resistant cuproprotein CopI (169 aa).

The first 20 residues, 1-20 (MIKKTLLVIALTFTVTTAFA), serve as a signal peptide directing secretion. Residues His98, Cys153, His158, and Met163 each coordinate Cu(2+).

Belongs to the CopI family.

It localises to the periplasm. Involved in copper tolerance. Mediates copper tolerance in aerobiosis. May also mediate tolerance under anaerobiosis. Not required for virulence or colonization in the mouse model. This is Copper-resistant cuproprotein CopI from Vibrio cholerae serotype O1 (strain ATCC 39315 / El Tor Inaba N16961).